Consider the following 271-residue polypeptide: Putative pyruvate, phosphate dikinase regulatory protein (271 aa).

150–157 (GVSRTSKT) is an ADP binding site.

The protein belongs to the pyruvate, phosphate/water dikinase regulatory protein family. PDRP subfamily.

It carries out the reaction N(tele)-phospho-L-histidyl/L-threonyl-[pyruvate, phosphate dikinase] + ADP = N(tele)-phospho-L-histidyl/O-phospho-L-threonyl-[pyruvate, phosphate dikinase] + AMP + H(+). It catalyses the reaction N(tele)-phospho-L-histidyl/O-phospho-L-threonyl-[pyruvate, phosphate dikinase] + phosphate + H(+) = N(tele)-phospho-L-histidyl/L-threonyl-[pyruvate, phosphate dikinase] + diphosphate. Its function is as follows. Bifunctional serine/threonine kinase and phosphorylase involved in the regulation of the pyruvate, phosphate dikinase (PPDK) by catalyzing its phosphorylation/dephosphorylation. The protein is Putative pyruvate, phosphate dikinase regulatory protein of Oceanobacillus iheyensis (strain DSM 14371 / CIP 107618 / JCM 11309 / KCTC 3954 / HTE831).